The chain runs to 213 residues: THAP domain-containing protein 1 (213 aa).

Residues 1–81 (MVQSCSAYGC…LKENAVPTIF (81 aa)) form a THAP-type zinc finger. The short motif at 134 to 137 (DHNY) is the HCFC1-binding motif (HBM) element. Residues 139–185 (VEDTMHQRKRIHQLEQQVEKLRKKLKTAQQRCRRQERQLEKLKEVVH) are involved in homodimer formation. The stretch at 139–190 (VEDTMHQRKRIHQLEQQVEKLRKKLKTAQQRCRRQERQLEKLKEVVHFQKEK) forms a coiled coil.

It belongs to the THAP1 family. In terms of assembly, homodimer. Interacts with PAWR. Component of a THAP1/THAP3-HCFC1-OGT complex that contains, either THAP1 or THAP3, HCFC1 and OGT. Interacts with OGT. Interacts (via the HBM) with HCFC1 (via the Kelch-repeat domain); the interaction recruits HCFC1 to the RRM1 promoter. Highly expressed in heart, skeletal muscle, kidney and liver. Weaker expression in brain and placenta.

The protein resides in the nucleus. It is found in the nucleoplasm. Its subcellular location is the PML body. In terms of biological role, DNA-binding transcription regulator that regulates endothelial cell proliferation and G1/S cell-cycle progression. Specifically binds the 5'-[AT]NTNN[GT]GGCA[AGT]-3' core DNA sequence and acts by modulating expression of pRB-E2F cell-cycle target genes, including RRM1. Component of a THAP1/THAP3-HCFC1-OGT complex that is required for the regulation of the transcriptional activity of RRM1. May also have pro-apoptotic activity by potentiating both serum-withdrawal and TNF-induced apoptosis. This Homo sapiens (Human) protein is THAP domain-containing protein 1 (THAP1).